Here is a 1062-residue protein sequence, read N- to C-terminus: Histone H3-lysine(4) N-trimethyltransferase ATX1 (1062 aa).

The segment at 159 to 184 is disordered; that stretch reads NAFSGNKQNGSSRRKGSSSKNQDKAT. A PWWP domain is found at 301–365; it reads PGDIVWAKLA…VKQAISFIKG (65 aa). A disordered region spans residues 401–424; that stretch reads QLQKGADSVDSDMANSTEEGNSGG. The FYR N-terminal domain maps to 441–500; that stretch reads DFRHIIGDLLIINLGKVVTDSQFFKDENHIWPEGYTAMRKFTSLTDHSASALYKMEVLRD. One can recognise an FYR C-terminal domain in the interval 504-586; it reads KTHPLFIVTA…RPSSHVSMCK (83 aa). The Phorbol-ester/DAG-type zinc finger occupies 591–647; it reads RHQNQPTGYRPVRVDWKDLDKCNVCHMDEEYENNLFLQCDKCRMMVHAKCYGELEPC. The segment at 599-1062 is interaction with PIP5; the sequence is YRPVRVDWKD…RCDLIDWTAE (464 aa). The PHD-type 1 zinc finger occupies 609–660; sequence LDKCNVCHMDEEYENNLFLQCDKCRMMVHAKCYGELEPCDGALWLCNLCRPG. The C2HC pre-PHD-type zinc-finger motif lies at 665–698; that stretch reads PPRCCLCPVVGGAMKPTTDGRWAHLACAIWIPET. The PHD-type 2 zinc-finger motif lies at 722–785; it reads LMCTICGVSY…RMLSFCKRHR (64 aa). In terms of domain architecture, SET spans 898–1016; that stretch reads KRLAFGKSGI…KWEELTYDYR (119 aa). Residue H908 participates in S-adenosyl-L-methionine binding. Residue S947 is glycosylated (O-linked (GlcNAc) serine). Residues Y954 and 977–978 contribute to the S-adenosyl-L-methionine site; that span reads NH. Zn(2+) is bound by residues C980, C1026, C1028, and C1033. One can recognise a Post-SET domain in the interval 1022 to 1038; the sequence is ERLSCSCGFPGCRGVVN.

Belongs to the class V-like SAM-binding methyltransferase superfamily. Histone-lysine methyltransferase family. TRX/MLL subfamily. In terms of assembly, interacts with PIP5. Interacts with WDR5A. Binds to CLF in the nucleus. Interacts with NRPB1 CTD domain, especially when NRPB1 is phosphorylated on 'Ser-5' of the heptapeptide repeat. Component of a nuclear protein complex containing at least TATA binding proteins (TBPs, e.g. TBP1 and TBP2) and ATX1. Associates with ULT1 for trimethylating 'Lys-4' on histone H3 (H3K4me3) at flower MADS box gene loci. Interacts with SEC. As to quaternary structure, interacts with A4/EF1A in the cytoplasm on the nuclear periphery. Post-translationally, activated via O-glycosylation by SEC; this modification triggers FLC locus H3K4me3 histone modification, thus preventing premature flowering. In terms of tissue distribution, strongly expressed in cotyledons, but weak levels in the first true leaves, except at the hydothodes. Ubiquitous with higher levels in dividing tissues, including inflorescence meristem and flower primordia. Expressed also in leaves (especially at hydathodes), in growing inflorescence stems and in the mature flowers. Strongly expressed in young seedlings.

The protein localises to the nucleus. Its subcellular location is the cytoplasm. It is found in the perinuclear region. It catalyses the reaction L-lysyl(4)-[histone H3] + 3 S-adenosyl-L-methionine = N(6),N(6),N(6)-trimethyl-L-lysyl(4)-[histone H3] + 3 S-adenosyl-L-homocysteine + 3 H(+). It carries out the reaction L-lysyl-[protein] + 3 S-adenosyl-L-methionine = N(6),N(6),N(6)-trimethyl-L-lysyl-[protein] + 3 S-adenosyl-L-homocysteine + 3 H(+). Its function is as follows. Binds to the promoter and regulates the transcription of target genes, maintaining them in an active state; at promoters, required for TATA binding proteins (TBPs, e.g. TBP1 and TBP2) and RNA polymerase II (Pol II) recruitment, and, in a subsequent event, is recruited by a phosphorylated form of Pol II to the +300-bp region of transcribed sequences to trimethylates nucleosomes. Histone trimethyltransferase that trimethylates 'Lys-4' of histone H3 (H3K4me3); H3 'Lys-4' methylation represents a specific tag for epigenetic transcriptional activation and is required for efficient elongation of transcription but not for transcription initiation. Methylates only a limited fraction of nucleosomes of target genes (e.g. FLC, NAP, XTH33 and WRKY70). Necessary for WDR5A occupancy at WRKY70 and LTP7 genes. Required to maintain the active state of class A (AP1 and AP2), class B (PI and AP3) and class C (AG, AGAMOUS) floral homeotic genes at early stages of flower development. Together with CLF, modulates AG nucleosome methylation statement. Involved in epigenetic regulation (e.g. H3K4me3) of the floral repressors FLC, FT and SOC1 to prevent the transition from vegetative to reproductive development, independently of the photoperiod; binds the active FLC locus before flowering, but this interaction is released upon the transition to flowering. Regulates floral organ identity and flowering transition. Functions as a receptor for the lipid messenger phosphatidylinositol 5-phosphate (PI5P), which negatively regulates its transcriptional activation activity. Exhibits histone methylase activity and subsequent transcriptional regulation on WRKY70 gene, and, to a lower extent on secondary defense-response targets salicylic acid (SA)-responsive gene PR1 and jasmonic acid (JA)-responsive gene THI2.1. Involved in response to dehydration stress-response in both abscisic acid (ABA)-dependent and ABA-independent pathways; this includes specific genes (e.g. COR15A, ADH1, CBF4, RD29A, RD29B, RD26, ABF3, NCED3 and ABA3) epigenetic regulation (e.g. H3K4me3 and Pol II recruitment) to promote their transcription and influence ABA production. Implicated in stomatal closure regulation. Indirect repressor of XTH genes (XTH33). Necessary for the phosphorylation of Pol II NRPB1 (e.g. Ser5P and Ser2P) at the promoters of target genes, thus regulating both early and late stages of transcription. Controls root growth and architecture by regulating the timing of root development, stem cell niche maintenance (e.g. quiescent center (QC)), and cell patterning during primary and lateral root development. Modulates cell cycle duration, cell production, and the transition from cell proliferation in the root apical meristem (RAM) to cell elongation. Trimethylates A4/EF1A post-translationally at Lys-396. Required for actin cytoskeleton organization. This is Histone H3-lysine(4) N-trimethyltransferase ATX1 from Arabidopsis thaliana (Mouse-ear cress).